Consider the following 189-residue polypeptide: GTP cyclohydrolase 1 (189 aa).

The Zn(2+) site is built by C78, H81, and C150.

This sequence belongs to the GTP cyclohydrolase I family. As to quaternary structure, toroid-shaped homodecamer, composed of two pentamers of five dimers.

The enzyme catalyses GTP + H2O = 7,8-dihydroneopterin 3'-triphosphate + formate + H(+). It participates in cofactor biosynthesis; 7,8-dihydroneopterin triphosphate biosynthesis; 7,8-dihydroneopterin triphosphate from GTP: step 1/1. This chain is GTP cyclohydrolase 1, found in Listeria monocytogenes serovar 1/2a (strain ATCC BAA-679 / EGD-e).